Consider the following 70-residue polypeptide: uncharacterized protein (70 aa).

This is an uncharacterized protein from Enterobacteria phage T4 (Bacteriophage T4).